A 101-amino-acid polypeptide reads, in one-letter code: Small ribosomal subunit protein uS14 (101 aa).

Residues methionine 1 to asparagine 10 are compositionally biased toward basic and acidic residues. Residues methionine 1 to lysine 23 form a disordered region. Residues asparagine 11–lysine 23 show a composition bias toward basic residues.

Belongs to the universal ribosomal protein uS14 family. Part of the 30S ribosomal subunit. Contacts proteins S3 and S10.

In terms of biological role, binds 16S rRNA, required for the assembly of 30S particles and may also be responsible for determining the conformation of the 16S rRNA at the A site. This Rhodopseudomonas palustris (strain HaA2) protein is Small ribosomal subunit protein uS14.